The sequence spans 33 residues: Mu-theraphotoxin-Osp1b (33 aa).

3 cysteine pairs are disulfide-bonded: C2–C17, C9–C22, and C16–C29.

This sequence belongs to the neurotoxin 10 (Hwtx-1) family. 22 (Htx-4) subfamily. In terms of tissue distribution, expressed by the venom gland.

Its subcellular location is the secreted. Functionally, voltage-gated sodium channel Nav1.7/SCN9A inhibitor. The polypeptide is Mu-theraphotoxin-Osp1b (Orphnaecus sp. (strain Maanghit-Cave/Philippines) (Tarantula spider)).